A 391-amino-acid chain; its full sequence is Succinyl-diaminopimelate desuccinylase (391 aa).

His-67 contacts Zn(2+). Asp-69 is a catalytic residue. Residue Asp-101 participates in Zn(2+) binding. Glu-135 functions as the Proton acceptor in the catalytic mechanism. 3 residues coordinate Zn(2+): Glu-136, Glu-164, and His-353.

This sequence belongs to the peptidase M20A family. DapE subfamily. In terms of assembly, homodimer. Requires Zn(2+) as cofactor. Co(2+) serves as cofactor.

The enzyme catalyses N-succinyl-(2S,6S)-2,6-diaminopimelate + H2O = (2S,6S)-2,6-diaminopimelate + succinate. It participates in amino-acid biosynthesis; L-lysine biosynthesis via DAP pathway; LL-2,6-diaminopimelate from (S)-tetrahydrodipicolinate (succinylase route): step 3/3. Functionally, catalyzes the hydrolysis of N-succinyl-L,L-diaminopimelic acid (SDAP), forming succinate and LL-2,6-diaminopimelate (DAP), an intermediate involved in the bacterial biosynthesis of lysine and meso-diaminopimelic acid, an essential component of bacterial cell walls. The polypeptide is Succinyl-diaminopimelate desuccinylase (Rickettsia bellii (strain RML369-C)).